We begin with the raw amino-acid sequence, 315 residues long: Glutamine synthetase nodule isozyme (315 aa).

Positions Ile19 to Gly99 constitute a GS beta-grasp domain. Positions Lys106–Ile315 constitute a GS catalytic domain.

The protein belongs to the glutamine synthetase family. In terms of assembly, homooctamer.

The protein resides in the cytoplasm. The enzyme catalyses L-glutamate + NH4(+) + ATP = L-glutamine + ADP + phosphate + H(+). The sequence is that of Glutamine synthetase nodule isozyme from Lupinus angustifolius (Narrow-leaved blue lupine).